The primary structure comprises 359 residues: Type-1 angiotensin II receptor A (359 aa).

Topologically, residues 1-25 are extracellular; sequence MALNSSAEDGIKRIQDDCPKAGRHS. A glycan (N-linked (GlcNAc...) asparagine) is linked at Asn4. The angiotensin II site is built by Gln15 and Asp17. 2 disulfide bridges follow: Cys18–Cys274 and Cys101–Cys180. Residues 26–55 traverse the membrane as a helical segment; sequence YIFVMIPTLYSIIFVVGIFGNSLVVIVIYF. Topologically, residues 56 to 61 are cytoplasmic; it reads YMKLKT. A helical membrane pass occupies residues 62–89; the sequence is VASVFLLNLALADLCFLLTLPLWAVYTA. The Extracellular segment spans residues 90–98; sequence MEYRWPFGN. The helical transmembrane segment at 99-125 threads the bilayer; the sequence is HLCKIASASVSFNLYASVFLLTCLSID. The Cytoplasmic segment spans residues 126–141; the sequence is RYLAIVHPMKSRLRRT. The chain crosses the membrane as a helical span at residues 142–165; sequence MLVAKVTCIIIWLMAGLASLPAVI. Residues 166–190 are Extracellular-facing; sequence HRNVYFIENTNITVCAFHYESRNST. Residue Arg167 coordinates angiotensin II. N-linked (GlcNAc...) asparagine glycosylation occurs at Asn176. Phe182, His183, and Tyr184 together coordinate angiotensin II. The N-linked (GlcNAc...) asparagine glycan is linked to Asn188. The helical transmembrane segment at 191 to 216 threads the bilayer; it reads LPIGLGLTKNILGFLFPFLIILTSYT. Lys199 lines the angiotensin II pocket. The Cytoplasmic segment spans residues 217–239; sequence LIWKALKKAYEIQKNKPRNDDIF. Residues 240–268 traverse the membrane as a helical segment; that stretch reads RIIMAIVLFFFFSWVPHQIFTFLDVLIQL. Residues 269 to 278 lie on the Extracellular side of the membrane; that stretch reads GVIHDCKISD. The chain crosses the membrane as a helical span at residues 279–304; that stretch reads IVDTAMPITICIAYFNNCLNPLFYGF. At 305 to 359 the chain is on the cytoplasmic side; that stretch reads LGKKFKKYFLQLLKYIPPKAKSHSSLSTKMSTLSYRPSDNMSSSAKKPASCFEVE. Residues 337-349 show a composition bias toward polar residues; sequence LSYRPSDNMSSSA. The tract at residues 337-359 is disordered; that stretch reads LSYRPSDNMSSSAKKPASCFEVE. Cys355 is lipidated: S-palmitoyl cysteine.

This sequence belongs to the G-protein coupled receptor 1 family. In terms of assembly, interacts with MAS1. Interacts with ARRB1. Interacts with FLNA (via filamin repeat 21); increases PKA-mediated phosphorylation of FLNA. C-terminal Ser or Thr residues may be phosphorylated. As to expression, is expressed in the liver, kidney, aorta, lung, uterus, ovary, spleen, heart, adrenal gland, and vascular smooth muscle cell.

The protein localises to the cell membrane. Its function is as follows. Receptor for angiotensin II, a vasoconstricting peptide, which acts as a key regulator of blood pressure and sodium retention by the kidney. The activated receptor in turn couples to G-alpha proteins G(q) (GNAQ, GNA11, GNA14 or GNA15) and thus activates phospholipase C and increases the cytosolic Ca(2+) concentrations, which in turn triggers cellular responses such as stimulation of protein kinase C. This is Type-1 angiotensin II receptor A (Agtr1) from Rattus norvegicus (Rat).